Reading from the N-terminus, the 365-residue chain is MLIYLFEWLSHYFKGLEVFSSYISVRIIMISITSLLITLALGRPMISWLQRMQIGQIVRDDGPQSHFSKRNTPTMGGVLILSSVIISCLLWGDLTSIYLWILILVVIFFGAIGFFDDYLKLVLKHPKGLRAKHKFALQSIFSIVLAIVLFYLLSKNGQMSLSIPFSKSLYIPMGIVIFVVLAFFIINGSSNAVNLTDGLDGLAIVPVVLVAAGLGIYAYIETNSTLANYLLFNYLGNPGLAEVAVFCAAVCGSGLAFLWFNSHPAEVFMGDVGSLTLGAVLGVIAVMVRQELIFFIMGLLFVVEALSVMLQVGSYKLRNGKRIFRMAPIHHHFELKGWPETKVVIRFWIISLILFLIGLAAIKVR.

A run of 10 helical transmembrane segments spans residues 22–42 (YISV…LALG), 74–94 (TMGG…WGDL), 95–115 (TSIY…IGFF), 134–154 (KFAL…YLLS), 168–188 (SLYI…IING), 201–221 (GLAI…AYIE), 240–260 (LAEV…FLWF), 267–287 (VFMG…IAVM), 292–312 (LIFF…MLQV), and 342–362 (KVVI…LAAI).

The protein belongs to the glycosyltransferase 4 family. MraY subfamily. Requires Mg(2+) as cofactor.

It is found in the cell inner membrane. The catalysed reaction is UDP-N-acetyl-alpha-D-muramoyl-L-alanyl-gamma-D-glutamyl-meso-2,6-diaminopimeloyl-D-alanyl-D-alanine + di-trans,octa-cis-undecaprenyl phosphate = di-trans,octa-cis-undecaprenyl diphospho-N-acetyl-alpha-D-muramoyl-L-alanyl-D-glutamyl-meso-2,6-diaminopimeloyl-D-alanyl-D-alanine + UMP. The protein operates within cell wall biogenesis; peptidoglycan biosynthesis. Functionally, catalyzes the initial step of the lipid cycle reactions in the biosynthesis of the cell wall peptidoglycan: transfers peptidoglycan precursor phospho-MurNAc-pentapeptide from UDP-MurNAc-pentapeptide onto the lipid carrier undecaprenyl phosphate, yielding undecaprenyl-pyrophosphoryl-MurNAc-pentapeptide, known as lipid I. The polypeptide is Phospho-N-acetylmuramoyl-pentapeptide-transferase (Francisella tularensis subsp. novicida (strain U112)).